We begin with the raw amino-acid sequence, 1226 residues long: Cytosolic carboxypeptidase 1 (1226 aa).

The segment at 599–619 (TEDDEDTESNSSVEQASVEVP) is disordered. Residues 848 to 1138 (YPYTYSTLQM…KFCVGLLRLK (291 aa)) form the Peptidase M14 domain. Zn(2+) is bound by residues H920, E923, and H1017. Residue E1102 is the Proton donor/acceptor of the active site. The residue at position 1168 (S1168) is a Phosphoserine. Positions 1206-1226 (YEPSAQEEVLSDSELSRTYLP) are disordered.

Belongs to the peptidase M14 family. Interacts with MYLK. Zn(2+) is required as a cofactor.

Its subcellular location is the cytoplasm. It is found in the cytosol. The protein resides in the nucleus. It localises to the mitochondrion. The enzyme catalyses (L-glutamyl)(n+1)-gamma-L-glutamyl-L-glutamyl-[protein] + H2O = (L-glutamyl)(n)-gamma-L-glutamyl-L-glutamyl-[protein] + L-glutamate. It carries out the reaction C-terminal L-alpha-aminoacyl-L-glutamyl-L-glutamyl-[tubulin] + H2O = C-terminal L-alpha-aminoacyl-L-glutamyl-[tubulin] + L-glutamate. Metallocarboxypeptidase that mediates protein deglutamylation of tubulin and non-tubulin target proteins. Catalyzes the removal of polyglutamate side chains present on the gamma-carboxyl group of glutamate residues within the C-terminal tail of alpha- and beta-tubulin. Specifically cleaves tubulin long-side-chains, while it is not able to remove the branching point glutamate. Also catalyzes the removal of polyglutamate residues from the carboxy-terminus of alpha-tubulin as well as non-tubulin proteins such as MYLK. Involved in KLF4 deglutamylation which promotes KLF4 proteasome-mediated degradation, thereby negatively regulating cell pluripotency maintenance and embryogenesis. This chain is Cytosolic carboxypeptidase 1, found in Homo sapiens (Human).